The sequence spans 406 residues: O-glycosyltransferase PaGT (406 aa).

The segment at 1 to 26 (MSPPSQIKPPQGTTPVPPSELDPRSD) is disordered.

The protein belongs to the afumC glycosyltransferase family.

The protein operates within mycotoxin biosynthesis. O-glycosyltransferase; part of the 2 gene clusters that mediate the biosynthesis of fusicoccins, diterpene glucosides that display phytohormone-like activity and function as potent activators of plasma membrane H(+)-ATPases in plants by modifying 14-3-3 proteins and cause the plant disease constriction canker. The first step in the pathway is performed by the fusicoccadiene synthase PaFS that possesses both prenyl transferase and terpene cyclase activity, converting isopentenyl diphosphate and dimethylallyl diphosphate into geranylgeranyl diphosphate (GGDP) and successively converting GGDP into fusicocca-2,10(14)-diene, a precursor for fusicoccin H. The second step is the oxidation at the C-8 position by the cytochrome P450 monooxygenase PaP450-2 to yield fusicocca-2,10(14)-diene-8-beta-ol. The cytochrome P450 monooxygenase PaP450-1 then catalyzes the hydroxylation at the C-16 position to produce fusicocca-2,10(14)-diene-8-beta,16-diol. The dioxygenase fc-dox then catalyzes the 16-oxydation of fusicocca-2,10(14)-diene-8-beta,16-diol to yield an aldehyde (8-beta-hydroxyfusicocca-1,10(14)-dien-16-al). The short-chain dehydrogenase/reductase fc-sdr catalyzes the reduction of the aldehyde to yield fusicocca-1,10(14)-diene-8-beta,16-diol. The next step is the hydroxylation at C-9 performed by the cytochrome P450 monooxygenase PaP450-3 that leads to fusicoccin H aglycon which is glycosylated to fusicoccin H by the O-glycosyltransferase PaGT. Hydroxylation at C-12 by the cytochrome P450 monooxygenase PaP450-4 leads then to the production of fusicoccin Q and is followed by methylation by the O-methyltransferase PaMT to yield fusicoccin P. Fusicoccin P is further converted to fusicoccin J via prenylation by the O-glucose prenyltransferase PaPT. Cytochrome P450 monooxygenase PaP450-5 then performs hydroxylation at C-19 to yield dideacetyl-fusicoccin A which is acetylated to 3'-O-deacetyl-fusicoccin A by the O-acetyltransferase PaAT-2. Finally, a another acetylation by the O-acetyltransferase PaAT-1 yields fusicoccin A. This is O-glycosyltransferase PaGT from Phomopsis amygdali (Fusicoccum amygdali).